The primary structure comprises 136 residues: 5-hydroxyisourate hydrolase (136 aa).

Residues 1-20 (MKRYILATVIASLVAAPAMA) form the signal peptide. The substrate site is built by H31, R69, and Y133.

This sequence belongs to the transthyretin family. 5-hydroxyisourate hydrolase subfamily. Homotetramer.

Its subcellular location is the periplasm. It catalyses the reaction 5-hydroxyisourate + H2O = 5-hydroxy-2-oxo-4-ureido-2,5-dihydro-1H-imidazole-5-carboxylate + H(+). In terms of biological role, catalyzes the hydrolysis of 5-hydroxyisourate (HIU) to 2-oxo-4-hydroxy-4-carboxy-5-ureidoimidazoline (OHCU). The sequence is that of 5-hydroxyisourate hydrolase (hiuH) from Salmonella typhimurium (strain LT2 / SGSC1412 / ATCC 700720).